The primary structure comprises 632 residues: Chaperone protein HtpG (632 aa).

Residues 1 to 339 (MTQQTMSFQA…SSDLPLNVSR (339 aa)) are a; substrate-binding. A b region spans residues 340-559 (EILQESRDVK…DNDMSGYLQR (220 aa)). The segment at 560–632 (MLKAAGQSAP…TNALLLSRAA (73 aa)) is c.

This sequence belongs to the heat shock protein 90 family. Homodimer.

It is found in the cytoplasm. Functionally, molecular chaperone. Has ATPase activity. This chain is Chaperone protein HtpG, found in Burkholderia pseudomallei (strain 668).